Here is a 151-residue protein sequence, read N- to C-terminus: Cytochrome c-type biogenesis protein CcmE 2 (151 aa).

Over 1–8 (MNPLRKKR) the chain is Cytoplasmic. A helical; Signal-anchor for type II membrane protein transmembrane segment spans residues 9 to 29 (LVIILAILVGVGAAVGLALSA). The Periplasmic portion of the chain corresponds to 30–151 (LQQNINLFYT…QSAPAPGKEG (122 aa)). The heme site is built by His124 and Tyr128.

This sequence belongs to the CcmE/CycJ family.

It is found in the cell inner membrane. Heme chaperone required for the biogenesis of c-type cytochromes. Transiently binds heme delivered by CcmC and transfers the heme to apo-cytochromes in a process facilitated by CcmF and CcmH. This is Cytochrome c-type biogenesis protein CcmE 2 from Pseudomonas fluorescens (strain Pf0-1).